A 313-amino-acid chain; its full sequence is Formimidoylglutamase (313 aa).

Residues His130, Asp155, His157, Asp159, Asp241, and Asp243 each contribute to the Mn(2+) site.

The protein belongs to the arginase family. Requires Mn(2+) as cofactor.

The catalysed reaction is N-formimidoyl-L-glutamate + H2O = formamide + L-glutamate. It functions in the pathway amino-acid degradation; L-histidine degradation into L-glutamate; L-glutamate from N-formimidoyl-L-glutamate (hydrolase route): step 1/1. Catalyzes the conversion of N-formimidoyl-L-glutamate to L-glutamate and formamide. The chain is Formimidoylglutamase from Citrobacter koseri (strain ATCC BAA-895 / CDC 4225-83 / SGSC4696).